A 241-amino-acid chain; its full sequence is MTTATQSSAPGVNVDQAEVEKFSALAARWWDPESEFKPLHAINPLRLGWIQETAGSLSGKRVLDMGCGGGILSESMAVAGAQVTGIDLAEKSLKIARLHGLESGVKVDYRAVPVEELAAEQPGQYDVVTCMEMLEHVPDPASVVRACAALAKPGGWVFFSTLNRNPKSFLFAIVGAEYVLRLLPRGTHSYDSFIKPSELATSARQAGLEPTGMRGMEYNPITQVYSLSANTSVNYLMSTRK.

S-adenosyl-L-methionine contacts are provided by Arg-46, Gly-66, Asp-87, and Met-131.

The protein belongs to the methyltransferase superfamily. UbiG/COQ3 family.

The enzyme catalyses a 3-demethylubiquinol + S-adenosyl-L-methionine = a ubiquinol + S-adenosyl-L-homocysteine + H(+). The catalysed reaction is a 3-(all-trans-polyprenyl)benzene-1,2-diol + S-adenosyl-L-methionine = a 2-methoxy-6-(all-trans-polyprenyl)phenol + S-adenosyl-L-homocysteine + H(+). It functions in the pathway cofactor biosynthesis; ubiquinone biosynthesis. Functionally, O-methyltransferase that catalyzes the 2 O-methylation steps in the ubiquinone biosynthetic pathway. In Bordetella pertussis (strain Tohama I / ATCC BAA-589 / NCTC 13251), this protein is Ubiquinone biosynthesis O-methyltransferase.